We begin with the raw amino-acid sequence, 476 residues long: Sulfite exporter TauE/SafE family protein 3 (476 aa).

Helical transmembrane passes span 8–28 (WLGL…FAFV), 76–92 (FNWQ…FGAA), 99–115 (VGGG…IIGF), 120–142 (ATAI…NLRL), 151–171 (IIDY…ISIG), 172–192 (VAFN…VLFL), 257–277 (VYWK…ALQI), 291–311 (VINL…AVAL), 339–359 (FGII…FIMG), 360–380 (PLFL…TFAM), 397–417 (FPVP…WVGQ), and 433–453 (IIFI…GVGI).

The protein belongs to the 4-toluene sulfonate uptake permease (TSUP) (TC 2.A.102) family.

Its subcellular location is the membrane. The polypeptide is Sulfite exporter TauE/SafE family protein 3 (Arabidopsis thaliana (Mouse-ear cress)).